Consider the following 451-residue polypeptide: MKQNKRKHLQTLFETLGEKHQFNGTVLAAEGGDILYHHSFGYAEMTEKRPLKTNSLFELASLSKPFTALGIILLEEKGILGYEDKVDRWLPGFPYQGVTIRHLLNHTSGLPDYMGWFFANWDSHKIAVNQDIVDMLMNEGLSGYFEPNEGWMYSNTGYVLLAVIIEKASGMSYADFIKTSIFLPAGMNETRVYNRRLSPERIDHYAYGYVYDVHSETYVLPDELEETNYVVYLDGIQGDGTVNSVTSDLFRFDQALYQDDFISKASKESAFSPVRLNNGETIDYGFGWVLQNSPEKGRIVSHSGGWPGYSTMMIRYIDHRKTLIYLSNKEEDTEYEQAILKAAEHILFGQPYDVPERPADKKKKAIDTAIYSRYVGSYLLQDGTAAQVTTENERLYLEIAGQLRLELFPSSETRFFLRALSVEVEFTLGEDAAKSFILYEDGSEEEAVRTK.

Residue serine 61 is the Acyl-ester intermediate of the active site.

This sequence belongs to the beta-lactamase family.

The protein resides in the forespore outer membrane. It participates in cell wall biogenesis; peptidoglycan biosynthesis. Probably involved in peptidoglycan modification during cortex synthesis. The polypeptide is Penicillin-binding protein 4* (pbpE) (Bacillus subtilis (strain 168)).